Consider the following 209-residue polypeptide: Probable spore germination lipoprotein YlaJ (209 aa).

A signal peptide spans 1-16; sequence MRILFIIIQLTLILSA. Residue C17 is the site of N-palmitoyl cysteine attachment. C17 is lipidated: S-diacylglycerol cysteine. Disordered stretches follow at residues 26 to 54 and 165 to 209; these read QNVE…KDNG and NDVI…NNND. Basic and acidic residues-rich tracts occupy residues 28–54 and 183–209; these read VEKE…KDNG and LNRK…NNND.

It is found in the forespore inner membrane. Functionally, probably contributes, directly or indirectly, to early events in germination. This is Probable spore germination lipoprotein YlaJ (ylaJ) from Bacillus subtilis (strain 168).